A 210-amino-acid polypeptide reads, in one-letter code: Noranthrone monooxygenase (210 aa).

4 consecutive transmembrane segments (helical) span residues 59-79 (TGSF…PILI), 105-125 (GIAL…YSVG), 131-151 (WMVA…FMNA), and 188-208 (VRAL…CGVV).

It belongs to the anthrone oxygenase family.

It localises to the membrane. The enzyme catalyses noranthrone + O2 = norsolorinic acid + H2O. It participates in mycotoxin biosynthesis; aflatoxin biosynthesis. Functionally, monooxygenase that converts norsolorinic acid anthrone to norsolorinic acid during aflatoxin biosynthesis. This chain is Noranthrone monooxygenase (hypC), found in Aspergillus flavus (strain ATCC 200026 / FGSC A1120 / IAM 13836 / NRRL 3357 / JCM 12722 / SRRC 167).